The following is a 219-amino-acid chain: Probable lipoprotein YiaD (219 aa).

The first 20 residues, 1–20 (MKKRVYLIAAVVSGALAVSG), serve as a signal peptide directing secretion. Cysteine 21 carries N-palmitoyl cysteine lipidation. The S-diacylglycerol cysteine moiety is linked to residue cysteine 21. Helical transmembrane passes span 37–55 (IGAG…LSSS) and 62–84 (GALI…MDVQ). Residues 103-219 (GDNIILNMPN…RRVEITLSPL (117 aa)) enclose the OmpA-like domain.

The protein localises to the cell inner membrane. It localises to the cell outer membrane. In terms of biological role, suppresses temperature-sensitive mutations in BamB when overexpressed. The polypeptide is Probable lipoprotein YiaD (yiaD) (Escherichia coli (strain K12)).